We begin with the raw amino-acid sequence, 108 residues long: Phosphoribosyl-ATP pyrophosphatase (108 aa).

It belongs to the PRA-PH family.

The protein resides in the cytoplasm. It catalyses the reaction 1-(5-phospho-beta-D-ribosyl)-ATP + H2O = 1-(5-phospho-beta-D-ribosyl)-5'-AMP + diphosphate + H(+). It participates in amino-acid biosynthesis; L-histidine biosynthesis; L-histidine from 5-phospho-alpha-D-ribose 1-diphosphate: step 2/9. The sequence is that of Phosphoribosyl-ATP pyrophosphatase from Aromatoleum aromaticum (strain DSM 19018 / LMG 30748 / EbN1) (Azoarcus sp. (strain EbN1)).